Here is a 531-residue protein sequence, read N- to C-terminus: T-complex protein 1 subunit zeta (531 aa).

An N-acetylalanine modification is found at alanine 2. An N6-acetyllysine modification is found at lysine 5. Position 39 (glycine 39) interacts with ADP. Glycine 39 contacts ATP. Aspartate 90 is a binding site for Mg(2+). Positions 91, 92, 93, 94, 158, and 159 each coordinate ADP. Positions 91, 92, and 93 each coordinate ATP. Lysine 199 is modified (N6-acetyllysine). The residue at position 205 (serine 205) is a Phosphoserine. Residue lysine 251 forms a Glycyl lysine isopeptide (Lys-Gly) (interchain with G-Cter in SUMO2) linkage. 4 positions are modified to N6-acetyllysine: lysine 287, lysine 365, lysine 377, and lysine 388. An ADP-binding site is contributed by alanine 411. Alanine 411, glycine 412, aspartate 496, and lysine 501 together coordinate ATP. Residue aspartate 496 coordinates ADP.

Belongs to the TCP-1 chaperonin family. In terms of assembly, component of the chaperonin-containing T-complex (TRiC), a hexadecamer composed of two identical back-to-back stacked rings enclosing a protein folding chamber. Each ring is made up of eight different subunits: TCP1/CCT1, CCT2, CCT3, CCT4, CCT5, CCT6A/CCT6, CCT7, CCT8. Interacts with PACRG.

The protein resides in the cytoplasm. The enzyme catalyses ATP + H2O = ADP + phosphate + H(+). In terms of biological role, component of the chaperonin-containing T-complex (TRiC), a molecular chaperone complex that assists the folding of actin, tubulin and other proteins upon ATP hydrolysis. The TRiC complex mediates the folding of WRAP53/TCAB1, thereby regulating telomere maintenance. This Bos taurus (Bovine) protein is T-complex protein 1 subunit zeta (CCT6A).